Reading from the N-terminus, the 166-residue chain is Small ribosomal subunit protein uS5 (166 aa).

Residues 11-74 (LQEKLIAVNR…EKARRNMITV (64 aa)) enclose the S5 DRBM domain.

This sequence belongs to the universal ribosomal protein uS5 family. Part of the 30S ribosomal subunit. Contacts proteins S4 and S8.

Functionally, with S4 and S12 plays an important role in translational accuracy. Located at the back of the 30S subunit body where it stabilizes the conformation of the head with respect to the body. The sequence is that of Small ribosomal subunit protein uS5 from Histophilus somni (strain 2336) (Haemophilus somnus).